The chain runs to 454 residues: uncharacterized protein (454 aa).

The protein belongs to the outer membrane factor (OMF) (TC 1.B.17) family.

This is an uncharacterized protein from Haemophilus influenzae (strain ATCC 51907 / DSM 11121 / KW20 / Rd).